The following is a 213-amino-acid chain: Redox-sensing transcriptional repressor Rex (213 aa).

A DNA-binding region (H-T-H motif) is located at residues 18–57; that stretch reads LYYRFVNTLKSKGIDRVNSKAISEGLNIDSATIRRDFSYF. 92 to 97 serves as a coordination point for NAD(+); that stretch reads GVGNLG.

It belongs to the transcriptional regulatory Rex family. In terms of assembly, homodimer.

The protein resides in the cytoplasm. Its function is as follows. Modulates transcription in response to changes in cellular NADH/NAD(+) redox state. This Staphylococcus saprophyticus subsp. saprophyticus (strain ATCC 15305 / DSM 20229 / NCIMB 8711 / NCTC 7292 / S-41) protein is Redox-sensing transcriptional repressor Rex.